The sequence spans 357 residues: Histidinol-phosphate aminotransferase (357 aa).

The residue at position 222 (K222) is an N6-(pyridoxal phosphate)lysine.

Belongs to the class-II pyridoxal-phosphate-dependent aminotransferase family. Histidinol-phosphate aminotransferase subfamily. As to quaternary structure, homodimer. Pyridoxal 5'-phosphate is required as a cofactor.

The catalysed reaction is L-histidinol phosphate + 2-oxoglutarate = 3-(imidazol-4-yl)-2-oxopropyl phosphate + L-glutamate. Its pathway is amino-acid biosynthesis; L-histidine biosynthesis; L-histidine from 5-phospho-alpha-D-ribose 1-diphosphate: step 7/9. The protein is Histidinol-phosphate aminotransferase of Leuconostoc mesenteroides subsp. mesenteroides (strain ATCC 8293 / DSM 20343 / BCRC 11652 / CCM 1803 / JCM 6124 / NCDO 523 / NBRC 100496 / NCIMB 8023 / NCTC 12954 / NRRL B-1118 / 37Y).